The chain runs to 167 residues: Menaquinol:cytochrome c reductase iron-sulfur subunit (167 aa).

In terms of domain architecture, Rieske spans Thr59–Leu158. Residues Cys100, His102, Cys121, and His124 each contribute to the [2Fe-2S] cluster site. Cys105 and Cys123 form a disulfide bridge.

It belongs to the Rieske iron-sulfur protein family. The main subunits of the menaquinol:cytochrome c complex are a Rieske-type iron-sulfur protein (QcrA), a cytochrome b (QcrB) and a cytochrome c (QcrC). The cofactor is [2Fe-2S] cluster.

In terms of biological role, component of the menaquinol:cytochrome c reductase complex. The Rieske protein is a high potential 2Fe-2S protein. This chain is Menaquinol:cytochrome c reductase iron-sulfur subunit (qcrA), found in Bacillus subtilis (strain 168).